The following is a 240-amino-acid chain: Methylthioribulose-1-phosphate dehydratase (240 aa).

Cys103 is a binding site for substrate. Positions 121 and 123 each coordinate Zn(2+). Residue Glu144 is the Proton donor/acceptor of the active site. His200 is a Zn(2+) binding site.

Belongs to the aldolase class II family. MtnB subfamily. The cofactor is Zn(2+).

Its subcellular location is the cytoplasm. The enzyme catalyses 5-(methylsulfanyl)-D-ribulose 1-phosphate = 5-methylsulfanyl-2,3-dioxopentyl phosphate + H2O. It functions in the pathway amino-acid biosynthesis; L-methionine biosynthesis via salvage pathway; L-methionine from S-methyl-5-thio-alpha-D-ribose 1-phosphate: step 2/6. Functionally, catalyzes the dehydration of methylthioribulose-1-phosphate (MTRu-1-P) into 2,3-diketo-5-methylthiopentyl-1-phosphate (DK-MTP-1-P). The chain is Methylthioribulose-1-phosphate dehydratase from Komagataella phaffii (strain GS115 / ATCC 20864) (Yeast).